A 373-amino-acid polypeptide reads, in one-letter code: Chaperone protein DnaJ (373 aa).

A J domain is found at 5–69; it reads DYYEVLGVNK…NKRANYDQFG (65 aa). Residues 130-212 form a CR-type zinc finger; that stretch reads GTKKEISIKK…CKGKGTENKT (83 aa). Residues cysteine 143, cysteine 146, cysteine 160, cysteine 163, cysteine 186, cysteine 189, cysteine 200, and cysteine 203 each coordinate Zn(2+). 4 CXXCXGXG motif repeats span residues 143–150, 160–167, 186–193, and 200–207; these read CHTCNGDG, CSYCNGAG, CPKCEGSG, and CPTCKGKG.

The protein belongs to the DnaJ family. In terms of assembly, homodimer. It depends on Zn(2+) as a cofactor.

It is found in the cytoplasm. Functionally, participates actively in the response to hyperosmotic and heat shock by preventing the aggregation of stress-denatured proteins and by disaggregating proteins, also in an autonomous, DnaK-independent fashion. Unfolded proteins bind initially to DnaJ; upon interaction with the DnaJ-bound protein, DnaK hydrolyzes its bound ATP, resulting in the formation of a stable complex. GrpE releases ADP from DnaK; ATP binding to DnaK triggers the release of the substrate protein, thus completing the reaction cycle. Several rounds of ATP-dependent interactions between DnaJ, DnaK and GrpE are required for fully efficient folding. Also involved, together with DnaK and GrpE, in the DNA replication of plasmids through activation of initiation proteins. The polypeptide is Chaperone protein DnaJ (Staphylococcus epidermidis (strain ATCC 12228 / FDA PCI 1200)).